A 335-amino-acid polypeptide reads, in one-letter code: Tyrosine-protein phosphatase 1 (335 aa).

The 314-residue stretch at 15–328 folds into the Tyrosine-protein phosphatase domain; sequence LLGKFKFIQN…LFIYHAAKYL (314 aa). S83 carries the phosphoserine; by CLK1 modification. C252 serves as the catalytic Phosphocysteine intermediate.

This sequence belongs to the protein-tyrosine phosphatase family. Non-receptor class subfamily. Post-translationally, activated by phosphorylation at Ser-83.

It localises to the cytoplasm. It catalyses the reaction O-phospho-L-tyrosyl-[protein] + H2O = L-tyrosyl-[protein] + phosphate. In terms of biological role, is not required for vegetative growth. This is Tyrosine-protein phosphatase 1 (PTP1) from Saccharomyces cerevisiae (strain ATCC 204508 / S288c) (Baker's yeast).